Reading from the N-terminus, the 126-residue chain is Protein ApaG (126 aa).

The region spanning 2–126 (SDPRYQIDVS…FRLAVPGALH (125 aa)) is the ApaG domain.

In Pseudomonas fluorescens (strain SBW25), this protein is Protein ApaG.